The sequence spans 465 residues: Transposase for insertion sequence IS1202 (465 aa).

The Integrase catalytic domain maps to His157–Ile340.

Functionally, required for the transposition of the insertion element. This Streptococcus pneumoniae protein is Transposase for insertion sequence IS1202.